A 349-amino-acid chain; its full sequence is Thioredoxin-related transmembrane protein 4 (349 aa).

Residues Met1–Ala23 form the signal peptide. The 108-residue stretch at Ala30–Glu137 folds into the Thioredoxin domain. Residues Cys64 and Cys67 each act as nucleophile in the active site. An intrachain disulfide couples Cys64 to Cys67. The chain crosses the membrane as a helical span at residues Val190–Ile210. Over residues Arg225–Gln240 the composition is skewed to basic and acidic residues. The segment at Arg225–Leu349 is disordered. Composition is skewed to acidic residues over residues Gln242–Asn284 and Val312–Ile321. A phosphoserine mark is found at Ser251 and Ser259. The span at Asp335–Leu349 shows a compositional bias: basic and acidic residues.

Its subcellular location is the nucleus inner membrane. It is found in the endoplasmic reticulum membrane. This chain is Thioredoxin-related transmembrane protein 4 (TMX4), found in Homo sapiens (Human).